A 561-amino-acid chain; its full sequence is Malate synthase, glyoxysomal (561 aa).

The active-site Proton acceptor is the Arg177. Asp462 acts as the Proton donor in catalysis. A Microbody targeting signal motif is present at residues 559–561; sequence SRL.

Belongs to the malate synthase family.

Its subcellular location is the glyoxysome. The catalysed reaction is glyoxylate + acetyl-CoA + H2O = (S)-malate + CoA + H(+). It functions in the pathway carbohydrate metabolism; glyoxylate cycle; (S)-malate from isocitrate: step 2/2. The chain is Malate synthase, glyoxysomal from Brassica napus (Rape).